The sequence spans 288 residues: Diaminopimelate epimerase (288 aa).

Residues Asn-17, Gln-47, and Asn-67 each contribute to the substrate site. The Proton donor role is filled by Cys-76. Residues 77–78 (GN), Asn-164, Asn-197, and 215–216 (ER) each bind substrate. Residue Cys-224 is the Proton acceptor of the active site. Substrate is bound at residue 225–226 (GS).

This sequence belongs to the diaminopimelate epimerase family. In terms of assembly, homodimer.

Its subcellular location is the cytoplasm. It catalyses the reaction (2S,6S)-2,6-diaminopimelate = meso-2,6-diaminopimelate. It participates in amino-acid biosynthesis; L-lysine biosynthesis via DAP pathway; DL-2,6-diaminopimelate from LL-2,6-diaminopimelate: step 1/1. Its function is as follows. Catalyzes the stereoinversion of LL-2,6-diaminopimelate (L,L-DAP) to meso-diaminopimelate (meso-DAP), a precursor of L-lysine and an essential component of the bacterial peptidoglycan. The chain is Diaminopimelate epimerase from Rhodopseudomonas palustris (strain BisA53).